Here is a 354-residue protein sequence, read N- to C-terminus: Uroporphyrinogen decarboxylase (354 aa).

Substrate is bound by residues 25–29 (RQAGR), aspartate 75, tyrosine 152, threonine 207, and histidine 330.

Belongs to the uroporphyrinogen decarboxylase family. As to quaternary structure, homodimer.

It localises to the cytoplasm. It carries out the reaction uroporphyrinogen III + 4 H(+) = coproporphyrinogen III + 4 CO2. Its pathway is porphyrin-containing compound metabolism; protoporphyrin-IX biosynthesis; coproporphyrinogen-III from 5-aminolevulinate: step 4/4. Catalyzes the decarboxylation of four acetate groups of uroporphyrinogen-III to yield coproporphyrinogen-III. This Xanthomonas campestris pv. campestris (strain 8004) protein is Uroporphyrinogen decarboxylase.